A 614-amino-acid chain; its full sequence is Sodium- and chloride-dependent betaine transporter (614 aa).

The interval 1-33 (MDRKVAVPEDGPPVVSWLPEEGEKLDQEGEDQV) is disordered. The Cytoplasmic portion of the chain corresponds to 1–44 (MDRKVAVPEDGPPVVSWLPEEGEKLDQEGEDQVKDRGQWTNKME). The segment covering 21–33 (EGEKLDQEGEDQV) has biased composition (basic and acidic residues). 3 helical membrane-spanning segments follow: residues 45-65 (FVLS…FPYL), 73-92 (AFFI…VFFL), and 117-137 (GIGL…IIIL). At 138–210 (AWALFYLFSS…SGIHDLGALR (73 aa)) the chain is on the extracellular side. The cysteines at positions 157 and 166 are disulfide-linked. N-linked (GlcNAc...) asparagine glycosylation is found at N171 and N183. The next 9 membrane-spanning stretches (helical) occupy residues 211-229 (WELA…FCIW), 238-255 (VVYF…ILLI), 291-308 (IFFS…LGSY), 320-341 (IALC…FSIL), 374-393 (MPLS…FLGL), 423-441 (LLIL…FLVT), 458-478 (GICL…VYGA), 499-518 (ISWL…FSLS), and 538-556 (IGWF…FVII). The Cytoplasmic portion of the chain corresponds to 557–614 (TLLKTRGSFKKRLRQLTTPDPSLPQPKQHLYLDGGTSQDCGPSPTKEGLIVGEKETHL). A disordered region spans residues 591–614 (GTSQDCGPSPTKEGLIVGEKETHL).

This sequence belongs to the sodium:neurotransmitter symporter (SNF) (TC 2.A.22) family. SLC6A12 subfamily. As to quaternary structure, interacts with LIN7C. Kidney.

It localises to the basolateral cell membrane. The protein resides in the cell membrane. It carries out the reaction 4-aminobutanoate(out) + chloride(out) + 3 Na(+)(out) = 4-aminobutanoate(in) + chloride(in) + 3 Na(+)(in). The catalysed reaction is glycine betaine(out) + 2 chloride(out) + 3 Na(+)(out) = glycine betaine(in) + 2 chloride(in) + 3 Na(+)(in). Functionally, transporter that mediates cellular uptake of betaine and GABA in a sodium- and chloride-dependent process. May have a role in regulation of GABAergic transmission in the brain through the reuptake of GABA into presynaptic terminals, as well as in osmotic regulation. Probably also involved in renal and hepatic osmotic regulation. This chain is Sodium- and chloride-dependent betaine transporter (SLC6A12), found in Canis lupus familiaris (Dog).